Reading from the N-terminus, the 184-residue chain is MGVIQAIDRLMTNPIPDGQVDDILRPQGESPLLQKGYVTTSVDALLNWARTGSMWPMTFGLACCAVEMMHAGAARLDLDRYGIVFRPSPRQSDVMIVAGTLVNKMAPALRKVYDQMPDPKWVISMGSCANGGGYYHYSYSVVRGCDRIVPVDVYVPGCPPTAEALVYGILQLQKKIWRTQTNAG.

Cys63, Cys64, Cys128, and Cys158 together coordinate [4Fe-4S] cluster.

The protein belongs to the complex I 20 kDa subunit family. NDH-1 is composed of 14 different subunits. Subunits NuoB, C, D, E, F, and G constitute the peripheral sector of the complex. [4Fe-4S] cluster serves as cofactor.

Its subcellular location is the cell inner membrane. The enzyme catalyses a quinone + NADH + 5 H(+)(in) = a quinol + NAD(+) + 4 H(+)(out). In terms of biological role, NDH-1 shuttles electrons from NADH, via FMN and iron-sulfur (Fe-S) centers, to quinones in the respiratory chain. Couples the redox reaction to proton translocation (for every two electrons transferred, four hydrogen ions are translocated across the cytoplasmic membrane), and thus conserves the redox energy in a proton gradient. The sequence is that of NADH-quinone oxidoreductase subunit B from Xylella fastidiosa (strain 9a5c).